A 901-amino-acid chain; its full sequence is MLIKLLTKVFGSRNDRTLRRMRKAVGIINAMEPEMEKLSDDELKGKTAEFRVRLEKGESVESLIPEAFAVVREASKRVFGMRHFDVQLLGGMVLNDRCIAEMRTGEGKTLTATLPAYLNALSGKGVHVVTVNDYLAQRDAENNRPLFEFLGMSVGINLPGMPAPAKREAYAADITYGTNNEYGFDYLRDNMAFSPEERVQRKLHYALVDEVDSILIDEARTPLIISGPAEDSSEMYKKVNKIIPHLIRQEKEDSDTFQGEGHFSVDEKARQVNLTERGLVLIEELLVKEGIMDEGESLYSPGNIMLMHHVTAALRAHALFTRDVDYIVKDGEVIIVDEHTGRTMQGRRWSDGLHQAVEAKEGVEIQNENQTLASITFQNYFRLYEKLAGMTGTADTEAFEFSSIYKLDTVVVPTNRPMIRKDMPDLVYMTEAEKIQAIIEDIKERTANGQPVLVGTISIEKSEVVSNELTKAGIKHNVLNAKFHANEAAIVAQAGYPAAVTIATNMAGRGTDIVLGGSWQAEVAELENPTPEQIAQIKADWQVRHEAVLASGGLHIIGTERHESRRIDNQLRGRSGRQGDAGSSRFYLSMEDALMRIFASDRVSGMMRKLGMKPGEAIEHPWVTKAIANAQRKVESRNFDIRKQLLEYDDVANDQRRAIYTQRNELLDVSDVSETINSIREDVFKVTIDAYIPPQSLEEMWDIPGLQERLKNDFDLDMPIAEWLDKEPELHEETLRERILAHSIEVYQRKEEVVGAEMMRHFEKGVMLQTLDSLWKEHLAAMDYLRQGIHLRGYAQKDPKQEYKRESFSMFAAMLESLKYEVVSTLSKVQVRMPEEVEAMEQQRREEAERLAQMQQLSHQDDDSAAAAALAAQTGDRKVGRNDPCPCGSGKKYKQCHGRLS.

Residues Q87, 105 to 109 (GEGKT), and D512 each bind ATP. The disordered stretch occupies residues 852-901 (AQMQQLSHQDDDSAAAAALAAQTGDRKVGRNDPCPCGSGKKYKQCHGRLS). The Zn(2+) site is built by C885, C887, C896, and H897. Residues 891–901 (KKYKQCHGRLS) show a composition bias toward basic residues.

The protein belongs to the SecA family. Monomer and homodimer. Part of the essential Sec protein translocation apparatus which comprises SecA, SecYEG and auxiliary proteins SecDF-YajC and YidC. Requires Zn(2+) as cofactor.

The protein resides in the cell inner membrane. It is found in the cytoplasm. The catalysed reaction is ATP + H2O + cellular proteinSide 1 = ADP + phosphate + cellular proteinSide 2.. Part of the Sec protein translocase complex. Interacts with the SecYEG preprotein conducting channel. Has a central role in coupling the hydrolysis of ATP to the transfer of proteins into and across the cell membrane, serving both as a receptor for the preprotein-SecB complex and as an ATP-driven molecular motor driving the stepwise translocation of polypeptide chains across the membrane. This is Protein translocase subunit SecA from Citrobacter koseri (strain ATCC BAA-895 / CDC 4225-83 / SGSC4696).